We begin with the raw amino-acid sequence, 501 residues long: Maturase K (501 aa).

Belongs to the intron maturase 2 family. MatK subfamily.

The protein localises to the plastid. The protein resides in the chloroplast. In terms of biological role, usually encoded in the trnK tRNA gene intron. Probably assists in splicing its own and other chloroplast group II introns. The sequence is that of Maturase K from Amborella trichopoda.